We begin with the raw amino-acid sequence, 250 residues long: Lymphotoxin-beta (250 aa).

Residues 1–26 (MGAPGLETRAGGPNGKSYLLLASVGA) lie on the Cytoplasmic side of the membrane. The chain crosses the membrane as a helical; Signal-anchor for type II membrane protein span at residues 27 to 47 (AVLGTLLLSVPITVLTVLALM). Topologically, residues 48 to 250 (PQEQGGQVAD…KTFFGAVMVG (203 aa)) are extracellular. In terms of domain architecture, THD spans 87–249 (PAAHLIGIAK…GKTFFGAVMV (163 aa)). Residue Asn-228 is glycosylated (N-linked (GlcNAc...) asparagine).

The protein belongs to the tumor necrosis factor family. As to quaternary structure, heterotrimer of either two LTB and one LTA subunits or (less prevalent) two LTA and one LTB subunits.

It is found in the membrane. Functionally, cytokine that binds to LTBR/TNFRSF3. May play a specific role in immune response regulation. Provides the membrane anchor for the attachment of the heterotrimeric complex to the cell surface. The protein is Lymphotoxin-beta (LTB) of Notamacropus eugenii (Tammar wallaby).